Consider the following 208-residue polypeptide: Guanylate kinase (208 aa).

The Guanylate kinase-like domain occupies 4 to 185 (GNLYILSAPS…ALADLVHILR (182 aa)). Residue 11–18 (APSGAGKS) coordinates ATP.

It belongs to the guanylate kinase family.

It localises to the cytoplasm. The enzyme catalyses GMP + ATP = GDP + ADP. In terms of biological role, essential for recycling GMP and indirectly, cGMP. The polypeptide is Guanylate kinase (Mannheimia succiniciproducens (strain KCTC 0769BP / MBEL55E)).